The sequence spans 170 residues: NADH-quinone oxidoreductase subunit B (170 aa).

[4Fe-4S] cluster contacts are provided by Cys37, Cys38, Cys102, and Cys131.

The protein belongs to the complex I 20 kDa subunit family. In terms of assembly, NDH-1 is composed of 14 different subunits. Subunits NuoB, C, D, E, F, and G constitute the peripheral sector of the complex. The cofactor is [4Fe-4S] cluster.

The protein localises to the cell inner membrane. It carries out the reaction a quinone + NADH + 5 H(+)(in) = a quinol + NAD(+) + 4 H(+)(out). Functionally, NDH-1 shuttles electrons from NADH, via FMN and iron-sulfur (Fe-S) centers, to quinones in the respiratory chain. The immediate electron acceptor for the enzyme in this species is believed to be ubiquinone. Couples the redox reaction to proton translocation (for every two electrons transferred, four hydrogen ions are translocated across the cytoplasmic membrane), and thus conserves the redox energy in a proton gradient. The protein is NADH-quinone oxidoreductase subunit B of Citrifermentans bemidjiense (strain ATCC BAA-1014 / DSM 16622 / JCM 12645 / Bem) (Geobacter bemidjiensis).